Consider the following 671-residue polypeptide: MQPTGNQIQQNQQQQQQLIMRVPKQEVSVSGAARRYVQQAPPNRPPRQNHQNGAIGGKKSSVTIQEVPNNAYLETLNKSGNNKVDDDKLPVFLIKLWNIVEDPNLQSIVHWDDSGASFHISDPYLFGRNVLPHFFKHNNMNSMVRQLNMYGFRKMTPLSQGGLTRTESDQDHLEFSHPCFVQGRPELLSQIKRKQSARTVEDKQVNEQTQQNLEVVMAEMRAMREKAKNMEDKMNKLTKENRDMWTQMGSMRQQHARQQQYFKKLLHFLVSVMQPGLSKRVAKRGVLEIDFCAANGTAGPNSKRARMNSEEGPYKDVCDLLESLQRETQEPFSRRFTNNEGPLISEVTDEFGNSPVGRGSAQDLFGDTFGAQSSRYSDGGATSSREQSPHPIISQPQSNSAGAHGANEQKPDDMYMGSGPLTHENIHRGISALKRDYQGASPASGGPSTSSSAPSGAGAGARMAQKRAAPYKNATRQMAQPQQDYSGGFVNNYSGFMPSDPSMIPYQPSHQYLQPHQKLMAIEDQHHPTTSTSSTNADPHQNLYSPTLGLSPSFDRQLSQELQEYFTGTDTSLESFRDLVSNHNWDDFGNNVPLDDDEEGSEDPLRQLALENAPETSNYDGAEDLLFDNEQQYPENGFDVPDPNYLPLADEEIFPHSPALRTPSPSDPNLV.

2 stretches are compositionally biased toward low complexity: residues 1 to 17 (MQPT…QQQQ) and 38 to 52 (QQAP…NHQN). Residues 1–61 (MQPTGNQIQQ…NGAIGGKKSS (61 aa)) are disordered. The interval 89-196 (LPVFLIKLWN…LLSQIKRKQS (108 aa)) is DNA-binding domain. A coiled-coil region spans residues 206–240 (NEQTQQNLEVVMAEMRAMREKAKNMEDKMNKLTKE). 4 disordered regions span residues 329–423 (QEPF…PLTH), 437–493 (YQGA…VNNY), 526–552 (HHPT…GLSP), and 612–671 (NAPE…PNLV). Residues 370–386 (GAQSSRYSDGGATSSRE) are compositionally biased toward polar residues. Over residues 439 to 456 (GASPASGGPSTSSSAPSG) the composition is skewed to low complexity. Composition is skewed to polar residues over residues 474 to 493 (ATRQ…VNNY) and 528 to 552 (PTTS…GLSP).

The protein belongs to the HSF family. As to quaternary structure, forms homodimers and homotrimers. Component of the DHIC (ddl-1-containing hsf-1 inhibitory complex), which contains at least ddl-1, ddl-2, hsb-1 and hsf-1. Within the complex, interacts with ddl-1. Formation of the DHIC may be dependent upon the Insulin/IGF-1-like signaling (IIS) mediated pathway. Phosphorylated. Post-translationally, sumoylated. Sumoylation may inhibit transcriptional activity in response to heat shock. Expressed in intestinal cells, body wall muscle cells, and hypodermal cells, as well as many neurons in the head and tail.

It localises to the nucleus. The protein localises to the cytoplasm. Functions as a stress-inducible and DNA-binding transcription factor, playing a central role in the transcriptional activation of the heat shock response (HSR), leading to the expression of a large class of molecular chaperones, heat shock proteins (HSPs), that protect cells from cellular insult damage. Upon exposure to heat and other stress stimuli, activates gene transcription through binding to site-specific heat shock elements (HSEs) present in the promoter regions of target genes, such as the HSPs. Binds to inverted 5'-NGAAN-3' pentamer DNA sequences in HSEs. Involved in positive modulation of expression of heat shock protein hsp-16.2 in response to heat shock; may act in concert with homeodomain-interacting protein kinase hpk-1. In response to heat shock or starvation, required for the modulation of lifespan, and protection against aberrant protein aggregation proteotoxicity; may act in parallel with the Insulin/IGF-1-like signaling (IIS) mediated pathway. Plays a role in modulating autophagy, in response to a moderate and short-term heat shock, also known as a hormetic heat shock. Involved in positive modulation of ascaroside pheromone biosynthesis in response to heat shock, perhaps by directly activating transcription of peroxisomal fatty acid beta-oxidation genes. Required in modulating the response to infection by either Gram-negative or Gram-positive bacteria, perhaps acting via regulation of expression of Hsp90/daf-21 and members of the small heat shock protein (HSP20) family. May play a role downstream of the daf-16/FOXO and daf-2 signaling pathway in response to bacterial pathogens. Modulates expression of multiple microRNA genes, in both heat shock-dependent and -independent manner. Independent of heat shock, required to modulate expression of genes involved in larval development, mainly distinct from HSPs; acts in concert with putative transcription factor efl-1/E2F, which may form part of a multiprotein DRM complex. Independent of heat shock, involved in promoting death of the linker cell, a male-specific cell which guides the elongation of the gonad; perhaps acting by modulating expression of ubiquitin-conjugating enzyme let-70. Plays a role in egg-laying. This chain is Heat shock transcription factor hsf-1, found in Caenorhabditis elegans.